Consider the following 286-residue polypeptide: 4-diphosphocytidyl-2-C-methyl-D-erythritol kinase (286 aa).

Lys-8 is a catalytic residue. 92–102 (PVSAGLAGGST) contributes to the ATP binding site. Asp-134 is a catalytic residue.

This sequence belongs to the GHMP kinase family. IspE subfamily.

The catalysed reaction is 4-CDP-2-C-methyl-D-erythritol + ATP = 4-CDP-2-C-methyl-D-erythritol 2-phosphate + ADP + H(+). The protein operates within isoprenoid biosynthesis; isopentenyl diphosphate biosynthesis via DXP pathway; isopentenyl diphosphate from 1-deoxy-D-xylulose 5-phosphate: step 3/6. Its function is as follows. Catalyzes the phosphorylation of the position 2 hydroxy group of 4-diphosphocytidyl-2C-methyl-D-erythritol. The sequence is that of 4-diphosphocytidyl-2-C-methyl-D-erythritol kinase from Caldicellulosiruptor bescii (strain ATCC BAA-1888 / DSM 6725 / KCTC 15123 / Z-1320) (Anaerocellum thermophilum).